The primary structure comprises 168 residues: Ribosome-binding factor A (168 aa).

Residues 122-136 (VRRDARPAGDDDPYR) are compositionally biased toward basic and acidic residues. Residues 122–168 (VRRDARPAGDDDPYRRPRPAAGEVDELSEVDELSEVDEYGGTARQEG) form a disordered region. Residues 144 to 159 (EVDELSEVDELSEVDE) are compositionally biased toward acidic residues.

This sequence belongs to the RbfA family. As to quaternary structure, monomer. Binds 30S ribosomal subunits, but not 50S ribosomal subunits or 70S ribosomes.

It is found in the cytoplasm. In terms of biological role, one of several proteins that assist in the late maturation steps of the functional core of the 30S ribosomal subunit. Associates with free 30S ribosomal subunits (but not with 30S subunits that are part of 70S ribosomes or polysomes). Required for efficient processing of 16S rRNA. May interact with the 5'-terminal helix region of 16S rRNA. This chain is Ribosome-binding factor A, found in Frankia casuarinae (strain DSM 45818 / CECT 9043 / HFP020203 / CcI3).